Consider the following 245-residue polypeptide: Demethylmenaquinone methyltransferase (245 aa).

S-adenosyl-L-methionine contacts are provided by residues threonine 70, aspartate 90, and 118–119 (DC).

This sequence belongs to the class I-like SAM-binding methyltransferase superfamily. MenG/UbiE family.

It catalyses the reaction a 2-demethylmenaquinol + S-adenosyl-L-methionine = a menaquinol + S-adenosyl-L-homocysteine + H(+). Its pathway is quinol/quinone metabolism; menaquinone biosynthesis; menaquinol from 1,4-dihydroxy-2-naphthoate: step 2/2. Its function is as follows. Methyltransferase required for the conversion of demethylmenaquinol (DMKH2) to menaquinol (MKH2). This Bacteroides fragilis (strain ATCC 25285 / DSM 2151 / CCUG 4856 / JCM 11019 / LMG 10263 / NCTC 9343 / Onslow / VPI 2553 / EN-2) protein is Demethylmenaquinone methyltransferase.